The primary structure comprises 334 residues: ADP-L-glycero-D-manno-heptose-6-epimerase (334 aa).

NADP(+) is bound by residues F11–I12, D32–N33, K39, K54, Q77–S81, and N94. Y141 acts as the Proton acceptor in catalysis. Residue K145 coordinates NADP(+). N171 is a binding site for substrate. Residues V172 and K180 each coordinate NADP(+). K180 serves as the catalytic Proton acceptor. Residues R182, H189, F203–N206, R216, and Y295 each bind substrate.

The protein belongs to the NAD(P)-dependent epimerase/dehydratase family. HldD subfamily. Homopentamer. NADP(+) serves as cofactor.

It catalyses the reaction ADP-D-glycero-beta-D-manno-heptose = ADP-L-glycero-beta-D-manno-heptose. The protein operates within nucleotide-sugar biosynthesis; ADP-L-glycero-beta-D-manno-heptose biosynthesis; ADP-L-glycero-beta-D-manno-heptose from D-glycero-beta-D-manno-heptose 7-phosphate: step 4/4. Catalyzes the interconversion between ADP-D-glycero-beta-D-manno-heptose and ADP-L-glycero-beta-D-manno-heptose via an epimerization at carbon 6 of the heptose. This Neisseria meningitidis serogroup C (strain 053442) protein is ADP-L-glycero-D-manno-heptose-6-epimerase.